The chain runs to 63 residues: Large ribosomal subunit protein uL30 (63 aa).

This sequence belongs to the universal ribosomal protein uL30 family. Part of the 50S ribosomal subunit.

This is Large ribosomal subunit protein uL30 from Xylella fastidiosa (strain 9a5c).